Here is a 160-residue protein sequence, read N- to C-terminus: METLKSDNKKRVLPSWMTAPGNERKVVSVKTAKRKQTAAIRVGAATRAPAKETVYCMNEAEMVDVALGILIEGRKQEKPWEQPSLVAPDKLQLSPPCSESPHTSSPGSSSEEEDSRTDSPALGLSPARGPEASNSPCSRSPEEGKEEEDELKYVREIFFS.

An N-acetylmethionine modification is found at M1. Residues M1 to G21 carry the KBM motif. Residues K78–K152 form a disordered region. Residues E99–S109 show a composition bias toward low complexity. The short motif at E150–S160 is the XLM element.

As to quaternary structure, interacts (via KBM motif) with XRCC5/Ku80 and XRCC6/Ku70 heterodimer. Interacts (via XLF motif) with TRIM28/KAP1, ATM, MRE11, NBN and RAD50. Interacts with splicing factor SF3B1. Interacts with ERCC6L2; this interaction is DNA independent.

The protein localises to the cytoplasm. It localises to the nucleus. The protein resides in the chromosome. Functionally, cell-cycle-specific regulator of classical non-homologous end joining (NHEJ) of DNA double-strand break (DSB) repair, which can act both as an activator or inhibitor of NHEJ, depending on the cell cycle phase. Acts as a regulator of DNA repair pathway choice by specifically inhibiting classical NHEJ during the S and G2 phases, thereby promoting error-free repair by homologous recombination during cell cycle phases when sister chromatids are present. Preferentially protects single-stranded overhangs at break sites by inhibiting classical NHEJ, thereby creating a local environment that favors homologous recombination. Acts via interaction with XRCC5/Ku80 and XRCC6/Ku70. In contrast, acts as an activator of NHEJ during G1 phase of the cell cycle: promotes classical NHEJ in G1 phase cells via multivalent interactions that increase the affinity of DNA damage response proteins for DSB-associated chromatin. Also involved in immunoglobulin V(D)J recombination. May also act as an indirect regulator of proteasome. The polypeptide is Cell cycle regulator of non-homologous end joining (Rattus norvegicus (Rat)).